Here is a 237-residue protein sequence, read N- to C-terminus: 1-(5-phosphoribosyl)-5-[(5-phosphoribosylamino)methylideneamino] imidazole-4-carboxamide isomerase (237 aa).

Asp8 serves as the catalytic Proton acceptor. Asp129 acts as the Proton donor in catalysis.

This sequence belongs to the HisA/HisF family.

It is found in the cytoplasm. It catalyses the reaction 1-(5-phospho-beta-D-ribosyl)-5-[(5-phospho-beta-D-ribosylamino)methylideneamino]imidazole-4-carboxamide = 5-[(5-phospho-1-deoxy-D-ribulos-1-ylimino)methylamino]-1-(5-phospho-beta-D-ribosyl)imidazole-4-carboxamide. It functions in the pathway amino-acid biosynthesis; L-histidine biosynthesis; L-histidine from 5-phospho-alpha-D-ribose 1-diphosphate: step 4/9. The polypeptide is 1-(5-phosphoribosyl)-5-[(5-phosphoribosylamino)methylideneamino] imidazole-4-carboxamide isomerase (Alkaliphilus metalliredigens (strain QYMF)).